A 702-amino-acid chain; its full sequence is Penicillin-binding protein activator LpoA (702 aa).

The signal sequence occupies residues 1-26; sequence MVPSTFLRSKPARCLPVLLATLIFAG. Residue C27 is the site of N-palmitoyl cysteine attachment. A lipid anchor (S-diacylglycerol cysteine) is attached at C27. The interval 327–378 is disordered; the sequence is GSRADPVQAPTQDQAAPAAEPAAQAPATSTTPQTTASPATQPVTAPAAQPQP. The span at 330–378 shows a compositional bias: low complexity; it reads ADPVQAPTQDQAAPAAEPAAQAPATSTTPQTTASPATQPVTAPAAQPQP.

The protein belongs to the LpoA family. Interacts with PBP1a.

The protein resides in the cell outer membrane. In terms of biological role, regulator of peptidoglycan synthesis that is essential for the function of penicillin-binding protein 1A (PBP1a). This Klebsiella pneumoniae subsp. pneumoniae (strain ATCC 700721 / MGH 78578) protein is Penicillin-binding protein activator LpoA.